The sequence spans 334 residues: Procathepsin L (334 aa).

Positions 1–17 (MTPLLLLAVLCLGTALA) are cleaved as a signal peptide. Residues 18-113 (TPKFDQTFNA…RLFQEPLMLQ (96 aa)) constitute a propeptide, activation peptide. Glu122 contacts Zn(2+). Cystine bridges form between Cys135–Cys178 and Cys169–Cys211. Residue Cys138 is part of the active site. Glu163, Asp184, Glu199, Glu205, Asp227, Asp250, His253, Asp273, and Asp275 together coordinate Zn(2+). Residues Cys269 and Cys322 are joined by a disulfide bond. Residue His276 is part of the active site. The propeptide occupies 289-290 (DS). Asn300 is an active-site residue.

Belongs to the peptidase C1 family. Dimer of a heavy and a light chain linked by disulfide bonds. Interacts with Long isoform of CD74/Ii chain; the interaction stabilizes the conformation of mature CTSL. In terms of processing, during export along the endocytic pathway, pro-CTSL undergoes several proteolytic cleavages to generate the CTSL single-chain and two-chain mature forms, composed of a heavy chain linked to a light chain by disulfide bonds. Autocleavage; produces the single-chain CTSL after cleavage of the propeptide. The cleavage can be intermolecular. Both mature cathepsin L1 and procathepsin L are found in the upper epidermis. The lower epidermis predominantly contains procathepsin L. In seminiferous tubules expression is greater at stages VI-VII than at stages IX-XII.

Its subcellular location is the lysosome. It is found in the apical cell membrane. The protein localises to the cytoplasmic vesicle. The protein resides in the secretory vesicle. It localises to the chromaffin granule. Its subcellular location is the secreted. It is found in the extracellular space. The catalysed reaction is Specificity close to that of papain. As compared to cathepsin B, cathepsin L exhibits higher activity toward protein substrates, but has little activity on Z-Arg-Arg-NHMec, and no peptidyl-dipeptidase activity.. Its activity is regulated as follows. Inhibited by the propeptide produced by autocleavage. Long isoform of CD74/Ii chain stabilizes the conformation of mature CTSL by binding to its active site and serving as a chaperone to help maintain a pool of mature enzyme in endocytic compartments and extracellular space of APCs. IFNG enhances the conversion into the CTSL mature and active form. Inhibited by CST6. Inhibited by the glycopeptide antibiotic teicoplanin. Inhibited by amantadine. Thiol protease important for the overall degradation of proteins in lysosomes. Plays a critical for normal cellular functions such as general protein turnover, antigen processing and bone remodeling. Involved in the solubilization of cross-linked TG/thyroglobulin and in the subsequent release of thyroid hormone thyroxine (T4) by limited proteolysis of TG/thyroglobulin in the thyroid follicle lumen. In neuroendocrine chromaffin cells secretory vesicles, catalyzes the prohormone proenkephalin processing to the active enkephalin peptide neurotransmitter. In thymus, regulates CD4(+) T cell positive selection by generating the major histocompatibility complex class II (MHCII) bound peptide ligands presented by cortical thymic epithelial cells. Also mediates invariant chain processing in cortical thymic epithelial cells. Major elastin-degrading enzyme at neutral pH. Accumulates as a mature and active enzyme in the extracellular space of antigen presenting cells (APCs) to regulate degradation of the extracellular matrix in the course of inflammation. Secreted form generates endostatin from COL18A1. Critical for cardiac morphology and function. Plays an important role in hair follicle morphogenesis and cycling, as well as epidermal differentiation. Required for maximal stimulation of steroidogenesis by TIMP1. This Rattus norvegicus (Rat) protein is Procathepsin L.